We begin with the raw amino-acid sequence, 528 residues long: (R)-citramalate synthase (528 aa).

The Pyruvate carboxyltransferase domain maps to 4–266; it reads VKLYDTTLRD…RECIGDDQLR (263 aa).

This sequence belongs to the alpha-IPM synthase/homocitrate synthase family.

It carries out the reaction pyruvate + acetyl-CoA + H2O = (3R)-citramalate + CoA + H(+). The protein operates within amino-acid biosynthesis; L-isoleucine biosynthesis; 2-oxobutanoate from pyruvate: step 1/3. Functionally, catalyzes the condensation of pyruvate and acetyl-coenzyme A to form (R)-citramalate. Makes part of the main pathway for isoleucine biosynthesis in G.sulfurreducens, i.e. the citramalate-dependent pathway. The protein is (R)-citramalate synthase of Geobacter sulfurreducens (strain ATCC 51573 / DSM 12127 / PCA).